Reading from the N-terminus, the 382-residue chain is MSTYTRPVMLLLCGLLLLTLAIAVLNTLVPLWLAQANLPTWQVGMVSSSYFTGNLVGTLFTGYLIKRIGFNHSYYLASLIFAAGCVGLGVMVGFWSWMSWRFIAGIGCAMIWVVVESALMCSGTSHNRGRLLAAYMMVYYMGTFLGQLLVSKVSGELLHVLPWVTGMILAGILPLLFTRIVNQQTQARHSSSISAMLKLRQARLGVNGCIISGIVLGSLYGLMPLYLKHQGMANASIGFWMAVLVSAGILGQWPMGRLADKFGRLLVLRVQVFVVILGSIAMLTQAAMAPALFILGAAGFTLYPVAMAWACEKVEHHQLVAMNQALLLSYTVGSLLGPSFAAMLMQNYSDNLLFIMIASVSFIYLLMLLRNAGQTPNPVAHI.

The next 12 membrane-spanning stretches (helical) occupy residues 8-28, 45-65, 75-95, 102-122, 131-151, 157-177, 204-224, 231-251, 270-290, 291-311, 325-345, and 349-369; these read VMLL…LNTL, MVSS…GYLI, YLAS…VGFW, FIAG…LMCS, LLAA…LLVS, LLHV…PLLF, LGVN…GLMP, GMAN…GILG, VQVF…AMAP, ALFI…AWAC, ALLL…AMLM, and SDNL…LMLL.

The protein belongs to the major facilitator superfamily. YcaD (TC 2.A.1.26) family.

The protein resides in the cell inner membrane. This is an uncharacterized protein from Salmonella paratyphi B (strain ATCC BAA-1250 / SPB7).